A 185-amino-acid polypeptide reads, in one-letter code: UPF0215 protein APE_0476.1 (185 aa).

The protein belongs to the UPF0215 family.

The polypeptide is UPF0215 protein APE_0476.1 (Aeropyrum pernix (strain ATCC 700893 / DSM 11879 / JCM 9820 / NBRC 100138 / K1)).